The sequence spans 24 residues: Attacin (24 aa).

The protein belongs to the attacin/sarcotoxin-2 family.

It localises to the secreted. Its function is as follows. Hemolymph antibacterial protein. The protein is Attacin of Heliothis virescens (Tobacco budworm moth).